A 384-amino-acid polypeptide reads, in one-letter code: Glucans biosynthesis protein C (384 aa).

10 consecutive transmembrane segments (helical) span residues 17–37 (AWLM…THSW), 54–74 (FIHA…SYML), 91–111 (VGIP…ILLQ), 140–160 (LWFL…FTWF), 173–193 (AISL…YAAI), 212–232 (FIVM…LAFI), 240–260 (FTTP…AYLL), 274–294 (TESV…FSLG), 311–331 (ASLF…AYIT), and 338–358 (LIGF…LYEI).

The protein belongs to the acyltransferase 3 family. OpgC subfamily.

The protein localises to the cell membrane. Its pathway is glycan metabolism; osmoregulated periplasmic glucan (OPG) biosynthesis. Functionally, necessary for the succinyl substitution of periplasmic glucans. Could catalyze the transfer of succinyl residues from the cytoplasmic side of the membrane to the nascent glucan backbones on the periplasmic side of the membrane. This chain is Glucans biosynthesis protein C, found in Salmonella gallinarum (strain 287/91 / NCTC 13346).